The primary structure comprises 365 residues: Histidinol-phosphate aminotransferase (365 aa).

An N6-(pyridoxal phosphate)lysine modification is found at Lys-220.

It belongs to the class-II pyridoxal-phosphate-dependent aminotransferase family. Histidinol-phosphate aminotransferase subfamily. As to quaternary structure, homodimer. Pyridoxal 5'-phosphate is required as a cofactor.

The enzyme catalyses L-histidinol phosphate + 2-oxoglutarate = 3-(imidazol-4-yl)-2-oxopropyl phosphate + L-glutamate. Its pathway is amino-acid biosynthesis; L-histidine biosynthesis; L-histidine from 5-phospho-alpha-D-ribose 1-diphosphate: step 7/9. The protein is Histidinol-phosphate aminotransferase of Neisseria meningitidis serogroup B (strain ATCC BAA-335 / MC58).